The following is a 512-amino-acid chain: Serine palmitoyltransferase 3 (512 aa).

The residue at position 345 (Lys345) is an N6-(pyridoxal phosphate)lysine.

Belongs to the class-II pyridoxal-phosphate-dependent aminotransferase family. In terms of assembly, heterodimer of sptl-1/sptl-3. Pyridoxal 5'-phosphate serves as cofactor.

It catalyses the reaction L-serine + hexadecanoyl-CoA + H(+) = 3-oxosphinganine + CO2 + CoA. The protein operates within lipid metabolism; sphingolipid metabolism. Functionally, component of the serine palmitoyltransferase (SPT) that catalyzes the first committed step in sphingolipid biosynthesis, which is the condensation of an acyl-CoA species and L-serine. The catalytic core is composed of a heterodimer of sptl-1 and sptl-2 or sptl-1 and sptl-3. Required for the specification of abicobasal polarity and development of the gut lumen. This chain is Serine palmitoyltransferase 3 (sptl-3), found in Caenorhabditis elegans.